The sequence spans 70 residues: Cytochrome c oxidase subunit 8B, mitochondrial (70 aa).

The N-terminal 24 residues, 1-24 (MPRLPPALRLLQPPLRCWVVPKLH), are a transit peptide targeting the mitochondrion. The Mitochondrial matrix segment spans residues 25-35 (VSAKPARTPTS). A helical transmembrane segment spans residues 36–59 (PAEQAVGLSMMFLSFLVPAGWVLS). At 60 to 70 (HLESYKKSSTA) the chain is on the mitochondrial intermembrane side.

The protein belongs to the cytochrome c oxidase VIII family. As to quaternary structure, component of the cytochrome c oxidase (complex IV, CIV), a multisubunit enzyme composed of 14 subunits. The complex is composed of a catalytic core of 3 subunits MT-CO1, MT-CO2 and MT-CO3, encoded in the mitochondrial DNA, and 11 supernumerary subunits COX4I, COX5A, COX5B, COX6A, COX6B, COX6C, COX7A, COX7B, COX7C, COX8 and NDUFA4, which are encoded in the nuclear genome. The complex exists as a monomer or a dimer and forms supercomplexes (SCs) in the inner mitochondrial membrane with NADH-ubiquinone oxidoreductase (complex I, CI) and ubiquinol-cytochrome c oxidoreductase (cytochrome b-c1 complex, complex III, CIII), resulting in different assemblies (supercomplex SCI(1)III(2)IV(1) and megacomplex MCI(2)III(2)IV(2)).

It is found in the mitochondrion inner membrane. It functions in the pathway energy metabolism; oxidative phosphorylation. Its function is as follows. Component of the cytochrome c oxidase, the last enzyme in the mitochondrial electron transport chain which drives oxidative phosphorylation. The respiratory chain contains 3 multisubunit complexes succinate dehydrogenase (complex II, CII), ubiquinol-cytochrome c oxidoreductase (cytochrome b-c1 complex, complex III, CIII) and cytochrome c oxidase (complex IV, CIV), that cooperate to transfer electrons derived from NADH and succinate to molecular oxygen, creating an electrochemical gradient over the inner membrane that drives transmembrane transport and the ATP synthase. Cytochrome c oxidase is the component of the respiratory chain that catalyzes the reduction of oxygen to water. Electrons originating from reduced cytochrome c in the intermembrane space (IMS) are transferred via the dinuclear copper A center (CU(A)) of subunit 2 and heme A of subunit 1 to the active site in subunit 1, a binuclear center (BNC) formed by heme A3 and copper B (CU(B)). The BNC reduces molecular oxygen to 2 water molecules using 4 electrons from cytochrome c in the IMS and 4 protons from the mitochondrial matrix. This is Cytochrome c oxidase subunit 8B, mitochondrial (COX8B) from Eulemur fulvus fulvus (Brown lemur).